Consider the following 117-residue polypeptide: Large ribosomal subunit protein bL20 (117 aa).

The protein belongs to the bacterial ribosomal protein bL20 family.

Functionally, binds directly to 23S ribosomal RNA and is necessary for the in vitro assembly process of the 50S ribosomal subunit. It is not involved in the protein synthesizing functions of that subunit. The protein is Large ribosomal subunit protein bL20 of Finegoldia magna (strain ATCC 29328 / DSM 20472 / WAL 2508) (Peptostreptococcus magnus).